We begin with the raw amino-acid sequence, 1067 residues long: Hemoglobin and hemoglobin-haptoglobin-binding protein B (1067 aa).

The N-terminal stretch at 1–24 is a signal peptide; sequence MTNFKFSLLACSIAFALNASTAYA. 6 repeat units span residues 26 to 29, 30 to 33, 34 to 37, 38 to 41, 42 to 45, and 46 to 49. The segment at 26-49 is 6 X 4 AA tandem repeats of Q-P-T-N; it reads QPTNQPTNQPTNQPTNQPTNQPTN. Over residues 26–51 the composition is skewed to low complexity; that stretch reads QPTNQPTNQPTNQPTNQPTNQPTNQN. Positions 26–53 are disordered; sequence QPTNQPTNQPTNQPTNQPTNQPTNQNSN. Positions 59–66 match the TonB box motif; the sequence is EQINVSGS. A TBDR plug domain is found at 71-196; that stretch reads NIKEKKVGET…LGGSVIFETK (126 aa). One can recognise a TBDR beta-barrel domain in the interval 204–1067; that stretch reads DKDYYLSYKR…NYRMSVQFEF (864 aa). A TonB C-terminal box motif is present at residues 1050-1067; sequence NRFYAPGRNYRMSVQFEF.

Belongs to the TonB-dependent receptor family. Hemoglobin/haptoglobin binding protein subfamily.

Its subcellular location is the cell outer membrane. In terms of biological role, acts as a receptor for hemoglobin or the hemoglobin/haptoglobin complex of the human host and is required for heme uptake. The sequence is that of Hemoglobin and hemoglobin-haptoglobin-binding protein B (hgbB) from Haemophilus influenzae.